The following is a 331-amino-acid chain: Major outer membrane protein P.IB (331 aa).

A signal peptide spans 1–19 (MKKSLIALTLAALPVAAMA).

This sequence belongs to the Gram-negative porin family. As to quaternary structure, homotrimer.

It is found in the cell outer membrane. Its function is as follows. Serves as a slightly cation selective porin. The chain is Major outer membrane protein P.IB (porB) from Neisseria meningitidis serogroup B.